The following is a 221-amino-acid chain: GTP-binding nuclear protein Ran-A1 (221 aa).

Residues 10 to 174 (DYPSFKLVIV…LYLARKLAGD (165 aa)) form the Small GTPase Ran-type domain. 21–28 (DGGTGKTT) provides a ligand contact to GTP. The switch-I stretch occupies residues 40–48 (KKYEPTIGV). Residues glycine 71, 125 to 128 (NKVD), and 153 to 155 (SAK) each bind GTP. The segment at 71-87 (GQEKFGGLRDGYYIHGQ) is switch-II. The span at 199–208 (QHEAELAAAA) shows a compositional bias: low complexity. Positions 199 to 221 (QHEAELAAAASQPLPDDDDETFD) are disordered.

Belongs to the small GTPase superfamily. Ran family. As to quaternary structure, found in a nuclear export complex with RanGTP, exportin and pre-miRNA.

Its subcellular location is the nucleus. Functionally, GTP-binding protein involved in nucleocytoplasmic transport. Required for the import of protein into the nucleus and also for RNA export. Involved in chromatin condensation and control of cell cycle. The sequence is that of GTP-binding nuclear protein Ran-A1 (RAN-A1) from Nicotiana tabacum (Common tobacco).